A 151-amino-acid chain; its full sequence is 3-hydroxyacyl-[acyl-carrier-protein] dehydratase FabZ (151 aa).

Histidine 58 is an active-site residue.

Belongs to the thioester dehydratase family. FabZ subfamily.

It localises to the cytoplasm. It catalyses the reaction a (3R)-hydroxyacyl-[ACP] = a (2E)-enoyl-[ACP] + H2O. Its function is as follows. Involved in unsaturated fatty acids biosynthesis. Catalyzes the dehydration of short chain beta-hydroxyacyl-ACPs and long chain saturated and unsaturated beta-hydroxyacyl-ACPs. This is 3-hydroxyacyl-[acyl-carrier-protein] dehydratase FabZ from Histophilus somni (strain 129Pt) (Haemophilus somnus).